Here is a 209-residue protein sequence, read N- to C-terminus: Molybdenum cofactor guanylyltransferase (209 aa).

GTP-binding positions include 13–15, Lys-26, Asn-54, Asp-74, and Asp-104; that span reads LAG. Mg(2+) is bound at residue Asp-104.

Belongs to the MobA family. As to quaternary structure, monomer. Mg(2+) serves as cofactor.

It localises to the cytoplasm. The catalysed reaction is Mo-molybdopterin + GTP + H(+) = Mo-molybdopterin guanine dinucleotide + diphosphate. In terms of biological role, transfers a GMP moiety from GTP to Mo-molybdopterin (Mo-MPT) cofactor (Moco or molybdenum cofactor) to form Mo-molybdopterin guanine dinucleotide (Mo-MGD) cofactor. The sequence is that of Molybdenum cofactor guanylyltransferase from Acinetobacter baumannii (strain ATCC 17978 / DSM 105126 / CIP 53.77 / LMG 1025 / NCDC KC755 / 5377).